We begin with the raw amino-acid sequence, 184 residues long: ADP-ribosylation factor-like protein 3 (184 aa).

Residue glycine 2 is the site of N-myristoyl glycine attachment. Residues 24–31 (GLDNAGKT), 68–72 (DIGGQ), and 127–130 (NKQD) each bind GTP.

The protein belongs to the small GTPase superfamily. Arf family.

Its subcellular location is the golgi apparatus. GTP-binding protein that may be involved in protein trafficking; may modulate vesicle budding and uncoating within the Golgi apparatus. The polypeptide is ADP-ribosylation factor-like protein 3 (arl-3) (Caenorhabditis elegans).